The primary structure comprises 244 residues: Krueppel-like factor 9 (244 aa).

2 disordered regions span residues 24–51 and 79–143; these read VPEH…GDPG and PSVC…EKRH. The segment covering 32–51 has biased composition (basic and acidic residues); that stretch reads DAERLRLPEREVTKEHGDPG. Residue S122 is modified to Phosphoserine. Positions 134–143 are enriched in basic residues; the sequence is KGKHASEKRH. C2H2-type zinc fingers lie at residues 143–167, 173–197, and 203–225; these read HKCP…YRVH, FPCT…YRTH, and FRCP…ARRH.

The protein belongs to the Sp1 C2H2-type zinc-finger protein family. In terms of assembly, interacts with ZZEF1.

The protein localises to the nucleus. In terms of biological role, transcription factor that binds to GC box promoter elements. Selectively activates mRNA synthesis from genes containing tandem repeats of GC boxes but represses genes with a single GC box. Acts as an epidermal circadian transcription factor regulating keratinocyte proliferation. This Rattus norvegicus (Rat) protein is Krueppel-like factor 9 (Klf9).